The chain runs to 545 residues: Chaperonin GroEL (545 aa).

ATP-binding positions include 30–33 (TLGP), K51, 87–91 (DGTTT), G415, and D495.

The protein belongs to the chaperonin (HSP60) family. As to quaternary structure, forms a cylinder of 14 subunits composed of two heptameric rings stacked back-to-back. Interacts with the co-chaperonin GroES.

It is found in the cytoplasm. It catalyses the reaction ATP + H2O + a folded polypeptide = ADP + phosphate + an unfolded polypeptide.. Functionally, together with its co-chaperonin GroES, plays an essential role in assisting protein folding. The GroEL-GroES system forms a nano-cage that allows encapsulation of the non-native substrate proteins and provides a physical environment optimized to promote and accelerate protein folding. The polypeptide is Chaperonin GroEL (Shewanella denitrificans (strain OS217 / ATCC BAA-1090 / DSM 15013)).